The chain runs to 683 residues: WD repeat-containing protein 48 homolog (683 aa).

WD repeat units follow at residues Ser27–Tyr82, Gln88–Cys130, Thr133–Asn167, Gly176–Lys215, Gly218–Thr257, Ala260–Leu299, and Lys302–Ile343. The segment at Leu341–Ser364 is disordered. The span at Ser351–Ser364 shows a compositional bias: low complexity. A WD 8 repeat occupies Pro389 to Asp428.

Belongs to the WD repeat WDR48 family. Interacts with usp-46; the interaction increases the catalytic activity of usp-46 in the presence of wdr-20. In terms of tissue distribution, expressed in several head neurons and cells in the tail including the anal depressor cell.

In terms of biological role, together with wdr-20, binds to and stimulates the activity of the deubiquitinating enzyme usp-46, leading to deubiquitination and stabilization of the glr-1 glutamate receptor. The polypeptide is WD repeat-containing protein 48 homolog (wdr-48) (Caenorhabditis elegans).